We begin with the raw amino-acid sequence, 215 residues long: Small ribosomal subunit protein uS3 (215 aa).

Residues 39–107 (VRQYLQKRLA…PVHINIEEIR (69 aa)) enclose the KH type-2 domain.

This sequence belongs to the universal ribosomal protein uS3 family. As to quaternary structure, part of the 30S ribosomal subunit. Forms a tight complex with proteins S10 and S14.

In terms of biological role, binds the lower part of the 30S subunit head. Binds mRNA in the 70S ribosome, positioning it for translation. The protein is Small ribosomal subunit protein uS3 of Nitrosomonas eutropha (strain DSM 101675 / C91 / Nm57).